Reading from the N-terminus, the 585-residue chain is Sodium/calcium exchanger NCL (585 aa).

5 helical membrane-spanning segments follow: residues 83–103 (VFLI…LSAG), 106–126 (LLLE…MLGA), 149–169 (VSVG…VIWG), 212–232 (IMAI…LGST), and 239–259 (VLIA…YQVF). 2 EF-hand domains span residues 299–334 (PDEH…ISFE) and 339–374 (DKDD…WLIQ). The Ca(2+) site is built by Asp312, Asn314, Asp316, His318, Glu323, Asp352, Asp356, Gln358, and Glu363. Transmembrane regions (helical) follow at residues 427 to 447 (WITI…AAFA) and 457 to 477 (FSAA…PLAT). Residue Asn478 is glycosylated (N-linked (GlcNAc...) asparagine). 3 consecutive transmembrane segments (helical) span residues 505 to 525 (CGGV…IVYV), 532 to 552 (FSSE…FASF), and 558 to 578 (LWTC…VYIL).

The protein belongs to the Ca(2+):cation antiporter (CaCA) (TC 2.A.19) family. As to expression, expressed in roots, leaves, stems, petals, stamens, ovules and siliques.

It is found in the cell membrane. The protein localises to the vacuole membrane. Its function is as follows. Possesses sodium/calcium exchanger (NCX) activity when expressed in a heterologous mammalian CHO-K1 cell system. Does not possess cation/proton exchanger (CAX) or sodium/proton (NHX) activity when expressed in a heterologous yeast cell system. Has the ability to bind calcium in vitro. Participates in the maintenance of calcium homeostasis. May play a role in auxin response, diurnal rhythm and flowering time. Involved in salt stress response. This Arabidopsis thaliana (Mouse-ear cress) protein is Sodium/calcium exchanger NCL.